The chain runs to 79 residues: Cytochrome c oxidase assembly factor 6 homolog (79 aa).

A CHCH domain is found at 9–52 (RQACWGARDLYWRCLDDNAEDAARCQKLRSSFEASCPQQWIKYF). The Cx9C motif signature appears at 12–22 (CWGARDLYWRC). Disulfide bonds link Cys-12–Cys-44 and Cys-22–Cys-33. Positions 33–44 (CQKLRSSFEASC) match the Cx10C motif motif.

Belongs to the cytochrome c oxidase subunit 6B family. Found in a complex with TMEM177, COX20, MT-CO2/COX2, COX18, SCO1 and SCO2. Interacts with COA1, MT-CO2/COX2, SCO1, SCO2 and COX20. Interacts with COX20 in a MT-CO2/COX2- and COX18-dependent manner. Interacts with COX16.

Its subcellular location is the mitochondrion. It is found in the mitochondrion intermembrane space. Its function is as follows. Involved in the maturation of the mitochondrial respiratory chain complex IV subunit MT-CO2/COX2. Thereby, may regulate early steps of complex IV assembly. Mitochondrial respiratory chain complex IV or cytochrome c oxidase is the component of the respiratory chain that catalyzes the transfer of electrons from intermembrane space cytochrome c to molecular oxygen in the matrix and as a consequence contributes to the proton gradient involved in mitochondrial ATP synthesis. May also be required for efficient formation of respiratory supercomplexes comprised of complexes III and IV. The protein is Cytochrome c oxidase assembly factor 6 homolog (Coa6) of Mus musculus (Mouse).